The sequence spans 571 residues: Zinc finger protein 181 (571 aa).

The KRAB domain maps to 4–76; the sequence is VTFNDVAIDF…EKKLSKGMIP (73 aa). Residues Lys-109 and Lys-126 each participate in a glycyl lysine isopeptide (Lys-Gly) (interchain with G-Cter in SUMO2) cross-link. 11 consecutive C2H2-type zinc fingers follow at residues 237 to 259, 265 to 287, 293 to 315, 321 to 343, 349 to 371, 377 to 399, 405 to 427, 433 to 455, 461 to 483, 489 to 511, and 517 to 539; these read YTCSECGKAFGKQSILNRHWRIH, YECRECGKTFSHGSSLTRHLISH, YKCIECGKAFSHVSSLTNHQSTH, YECMNCGKSFSRVSHLIEHLRIH, YECRICGKAFIHRSSLIHHQKIH, YECRECGKAFCCSSHLTRHQRIH, YECNKCLKVFSSLSFLVQHQSIH, FECQKCRKSFNQLESLNMHLRNH, YECSICGKAFSHRSSLLQHHRIH, YECIKCGKTFSCSSNLTVHQRIH, and YKCNECGKAFSKGSNLTAHQRVH.

The protein belongs to the krueppel C2H2-type zinc-finger protein family.

Its subcellular location is the nucleus. May be involved in transcriptional regulation. This is Zinc finger protein 181 (ZNF181) from Homo sapiens (Human).